The chain runs to 486 residues: Scarecrow-like protein 15 (486 aa).

A disordered region spans residues 1–28 (MKIPASSPQDTTNNNNNTNSTDSNHLSM). A compositionally biased stretch (low complexity) spans 10 to 24 (DTTNNNNNTNSTDSN). The GRAS domain maps to 113–485 (DSVDNGGFDF…RALVATSAWR (373 aa)). A leucine repeat I (LRI) region spans residues 120–179 (FDFIEDLIRVVDCVESDELQLAQVVLSRLNQRLRSPAGRPLQRAAFYFKEALGSFLTGSN). The segment at 198 to 266 (IKEYSGISPI…VSGGFLRVTA (69 aa)) is VHIID. Positions 232–236 (VHVVD) match the VHIID motif. The interval 278–310 (LVKENLTQFAAEMKIRFQIEFVLMKTFEMLSFK) is leucine repeat II (LRII). The tract at residues 320–410 (TVVLISPAIF…AFVLRPKISA (91 aa)) is PFYRE. The interval 413 to 485 (ETAADRRHTG…RALVATSAWR (73 aa)) is SAW.

The protein belongs to the GRAS family. In terms of tissue distribution, expressed in seedlings, roots, leaves and flowers.

The protein localises to the nucleus. In terms of biological role, probable transcription factor involved in plant development. This is Scarecrow-like protein 15 (SCL15) from Arabidopsis thaliana (Mouse-ear cress).